Reading from the N-terminus, the 124-residue chain is Acidic phospholipase A2 A (124 aa).

7 disulfide bridges follow: cysteine 26–cysteine 116, cysteine 28–cysteine 44, cysteine 43–cysteine 95, cysteine 49–cysteine 124, cysteine 50–cysteine 88, cysteine 57–cysteine 81, and cysteine 75–cysteine 86. Positions 27, 29, and 31 each coordinate Ca(2+). The active site involves histidine 47. Residue aspartate 48 coordinates Ca(2+). Aspartate 89 is an active-site residue.

This sequence belongs to the phospholipase A2 family. Group II subfamily. D49 sub-subfamily. Ca(2+) serves as cofactor. Expressed by the venom gland.

The protein resides in the secreted. It carries out the reaction a 1,2-diacyl-sn-glycero-3-phosphocholine + H2O = a 1-acyl-sn-glycero-3-phosphocholine + a fatty acid + H(+). PLA2 catalyzes the calcium-dependent hydrolysis of the 2-acyl groups in 3-sn-phosphoglycerides. The sequence is that of Acidic phospholipase A2 A from Gloydius halys (Chinese water mocassin).